A 380-amino-acid chain; its full sequence is DNA replication and repair protein RecF (380 aa).

Residue 30–37 participates in ATP binding; the sequence is GENAQGKT.

The protein belongs to the RecF family.

The protein resides in the cytoplasm. In terms of biological role, the RecF protein is involved in DNA metabolism; it is required for DNA replication and normal SOS inducibility. RecF binds preferentially to single-stranded, linear DNA. It also seems to bind ATP. In Synechococcus sp. (strain JA-3-3Ab) (Cyanobacteria bacterium Yellowstone A-Prime), this protein is DNA replication and repair protein RecF.